The primary structure comprises 52 residues: Conotoxin Cal6.25 (52 aa).

An N-terminal signal peptide occupies residues 1–22; sequence MKLTHVLIVAVLVLTVCHLTMA. Disulfide bonds link Cys-24–Cys-41, Cys-31–Cys-45, and Cys-40–Cys-50.

In terms of tissue distribution, expressed by the venom duct.

The protein localises to the secreted. In terms of biological role, probable neurotoxin. In Californiconus californicus (California cone), this protein is Conotoxin Cal6.25.